The chain runs to 282 residues: 2-dehydro-3-deoxyphosphooctonate aldolase (282 aa).

It belongs to the KdsA family.

It localises to the cytoplasm. It catalyses the reaction D-arabinose 5-phosphate + phosphoenolpyruvate + H2O = 3-deoxy-alpha-D-manno-2-octulosonate-8-phosphate + phosphate. It functions in the pathway carbohydrate biosynthesis; 3-deoxy-D-manno-octulosonate biosynthesis; 3-deoxy-D-manno-octulosonate from D-ribulose 5-phosphate: step 2/3. Its pathway is bacterial outer membrane biogenesis; lipopolysaccharide biosynthesis. The polypeptide is 2-dehydro-3-deoxyphosphooctonate aldolase (Shewanella amazonensis (strain ATCC BAA-1098 / SB2B)).